A 46-amino-acid chain; its full sequence is Large ribosomal subunit protein bL36 (46 aa).

It belongs to the bacterial ribosomal protein bL36 family.

This chain is Large ribosomal subunit protein bL36, found in Photorhabdus laumondii subsp. laumondii (strain DSM 15139 / CIP 105565 / TT01) (Photorhabdus luminescens subsp. laumondii).